The following is a 62-amino-acid chain: UPF0291 protein CLB_2550 (62 aa).

The protein belongs to the UPF0291 family.

Its subcellular location is the cytoplasm. This is UPF0291 protein CLB_2550 from Clostridium botulinum (strain ATCC 19397 / Type A).